Reading from the N-terminus, the 467-residue chain is Nuclear distribution protein nudF (467 aa).

The 33-residue stretch at 9 to 41 folds into the LisH domain; it reads QAEELHKSIIAYLASVNLTESSAALRAELGDSV. A coiled-coil region spans residues 60–87; that stretch reads TSVVRLQKKIMDLESRCAALQSELDSAT. WD repeat units follow at residues 113–154, 156–196, 200–247, 250–289, 292–352, 354–393, 398–428, and 429–466; these read GHRN…RTVK, HTKA…KNIR, GHDH…CVKT, GHVD…TKST, GHEH…IKTL, GHDN…KCVR, AHGH…NGTP, and AATS…RIFA. Positions 417 to 439 are disordered; it reads GANGEAETNGTPAATSTTNGVRP. Polar residues predominate over residues 422 to 436; sequence AETNGTPAATSTTNG.

It belongs to the WD repeat LIS1/nudF family. Self-associates. Interacts with nudE and dynein.

The protein localises to the cytoplasm. It localises to the cytoskeleton. Its subcellular location is the spindle pole. Functionally, positively regulates the activity of the minus-end directed microtubule motor protein dynein. May enhance dynein-mediated microtubule sliding by targeting dynein to the microtubule plus end. Required for nuclear migration during vegetative growth as well as development. Required for retrograde early endosome (EE) transport from the hyphal tip. Required for localization of dynein to the mitotic spindle poles. Recruits additional proteins to the dynein complex at SPBs. The polypeptide is Nuclear distribution protein nudF (Aspergillus fumigatus (strain CBS 144.89 / FGSC A1163 / CEA10) (Neosartorya fumigata)).